Reading from the N-terminus, the 103-residue chain is MAAKLKKGDKVIVLAGKDKGKTGSISSVDPKSGKAIVDGINIAIRATRQSQTEQGGRIPKAMPIDLSNLAYVDANGKATRVGFKMEGDKKVRFAKTTGDVIDA.

The protein belongs to the universal ribosomal protein uL24 family. Part of the 50S ribosomal subunit.

In terms of biological role, one of two assembly initiator proteins, it binds directly to the 5'-end of the 23S rRNA, where it nucleates assembly of the 50S subunit. Functionally, one of the proteins that surrounds the polypeptide exit tunnel on the outside of the subunit. This Roseobacter denitrificans (strain ATCC 33942 / OCh 114) (Erythrobacter sp. (strain OCh 114)) protein is Large ribosomal subunit protein uL24.